The following is a 240-amino-acid chain: MADKREPAPGWPILKGEYEVGDVKNSVLVITCGSHLPGKPILDAGAACTGSCKTENLGIEKVVAHIISNPNIRYLLVTGSEVKGHITGQSMMSLHANGVKENRIAGALGAIPYVENLNAAAVARFQEQVQVVNLLDTEDMGAITSKVRELASKDPGAFDADPLVVEISEEGEEEEEGGVVRPVSGEIAVLRSRLKAIEARMMDIGNLNKFHSGVHAGKVEGAMIGLTITISLLGLLLLGR.

Residues 1–218 (MADKREPAPG…KFHSGVHAGK (218 aa)) lie on the Cytoplasmic side of the membrane. Residue His-85 coordinates 5-hydroxybenzimidazolylcob(I)amide. Residues 219-239 (VEGAMIGLTITISLLGLLLLG) traverse the membrane as a helical segment. Arg-240 is a topological domain (extracellular).

Belongs to the MtrA family. As to quaternary structure, the complex is composed of 8 subunits; MtrA, MtrB, MtrC, MtrD, MtrE, MtrF, MtrG and MtrH. Requires 5-hydroxybenzimidazolylcob(I)amide as cofactor.

The protein resides in the cell membrane. It carries out the reaction 5-methyl-5,6,7,8-tetrahydromethanopterin + coenzyme M + 2 Na(+)(in) = 5,6,7,8-tetrahydromethanopterin + methyl-coenzyme M + 2 Na(+)(out). Its pathway is one-carbon metabolism; methanogenesis from CO(2); methyl-coenzyme M from 5,10-methylene-5,6,7,8-tetrahydromethanopterin: step 2/2. Part of a complex that catalyzes the formation of methyl-coenzyme M and tetrahydromethanopterin from coenzyme M and methyl-tetrahydromethanopterin. This is an energy-conserving, sodium-ion translocating step. This is Tetrahydromethanopterin S-methyltransferase subunit A from Methanosarcina mazei (strain ATCC BAA-159 / DSM 3647 / Goe1 / Go1 / JCM 11833 / OCM 88) (Methanosarcina frisia).